Consider the following 30-residue polypeptide: Cyclotide mech-1 (30 aa).

The cyclopeptide (Gly-Asp) cross-link spans 1–30 (GVIPCGESCVFIPCINKKKCSCKNKVCYRD). 3 disulfides stabilise this stretch: Cys5–Cys20, Cys9–Cys22, and Cys14–Cys27.

Post-translationally, this is a cyclic peptide. In terms of processing, contains 3 disulfide bonds.

Functionally, probably participates in a plant defense mechanism (Potential). Binds to and induces leakage in phospholipd membranes, particularly ones containing 1-palmitoyl-2-oleophosphatidylethanolamine (POPE). Not active against Gram-negative bacterium E.coli ATCC 25922 or Gram-positive bacterium S.aureus ATCC 25923 up to a concentration of 64 uM. The sequence is that of Cyclotide mech-1 from Melicytus chathamicus (Chatham Island mahoe).